Consider the following 315-residue polypeptide: Ribonuclease Z (315 aa).

Zn(2+)-binding residues include His-61, His-63, Asp-65, His-66, His-151, Asp-219, and His-278. Catalysis depends on Asp-65, which acts as the Proton acceptor.

Belongs to the RNase Z family. As to quaternary structure, homodimer. It depends on Zn(2+) as a cofactor.

The enzyme catalyses Endonucleolytic cleavage of RNA, removing extra 3' nucleotides from tRNA precursor, generating 3' termini of tRNAs. A 3'-hydroxy group is left at the tRNA terminus and a 5'-phosphoryl group is left at the trailer molecule.. Functionally, zinc phosphodiesterase, which displays some tRNA 3'-processing endonuclease activity. Probably involved in tRNA maturation, by removing a 3'-trailer from precursor tRNA. In Clostridium botulinum (strain Alaska E43 / Type E3), this protein is Ribonuclease Z.